Consider the following 260-residue polypeptide: 1-(5-phosphoribosyl)-5-[(5-phosphoribosylamino)methylideneamino] imidazole-4-carboxamide isomerase (260 aa).

D8 functions as the Proton acceptor in the catalytic mechanism. D130 acts as the Proton donor in catalysis.

The protein belongs to the HisA/HisF family.

The protein resides in the cytoplasm. It carries out the reaction 1-(5-phospho-beta-D-ribosyl)-5-[(5-phospho-beta-D-ribosylamino)methylideneamino]imidazole-4-carboxamide = 5-[(5-phospho-1-deoxy-D-ribulos-1-ylimino)methylamino]-1-(5-phospho-beta-D-ribosyl)imidazole-4-carboxamide. The protein operates within amino-acid biosynthesis; L-histidine biosynthesis; L-histidine from 5-phospho-alpha-D-ribose 1-diphosphate: step 4/9. In Chlorobium phaeobacteroides (strain BS1), this protein is 1-(5-phosphoribosyl)-5-[(5-phosphoribosylamino)methylideneamino] imidazole-4-carboxamide isomerase.